We begin with the raw amino-acid sequence, 500 residues long: NADH-quinone oxidoreductase subunit N (500 aa).

14 helical membrane passes run 13-33 (VMMPEFIILGVAVALSLIDLF), 42-62 (LLGLFAFVGIAVSFVSLLSLW), 79-99 (FAKSFKALLLIGSALVLLLSI), 111-131 (GEFYYLFLTALLGAMMMASSG), 133-153 (LITLFVGLELLSISSYILVAI), 168-188 (VITGSIATAITLFGMSYIFGF), 211-231 (YVLSLAFLLTFVGLSFKLASA), 245-265 (TTPVVSFLSVVSKTAGFVIVL), 281-301 (ASMLMTFAPYIAFLSGATMII), 321-341 (VAHAGYVLVAFASLSMFMFEA), 342-362 (IWFYLLAYVFMTIGAFAILQV), 386-406 (AIAMTIFLLSLAGIPGTAGFI), 424-444 (VLASIMVITTIISYVYYFGIF), and 461-481 (PPGVIAVVVICVIGTVLLGVF).

Belongs to the complex I subunit 2 family. As to quaternary structure, NDH-1 is composed of 14 different subunits. Subunits NuoA, H, J, K, L, M, N constitute the membrane sector of the complex.

Its subcellular location is the cell membrane. The enzyme catalyses a quinone + NADH + 5 H(+)(in) = a quinol + NAD(+) + 4 H(+)(out). In terms of biological role, NDH-1 shuttles electrons from NADH, via FMN and iron-sulfur (Fe-S) centers, to quinones in the respiratory chain. The immediate electron acceptor for the enzyme in this species is believed to be a menaquinone. Couples the redox reaction to proton translocation (for every two electrons transferred, four hydrogen ions are translocated across the cytoplasmic membrane), and thus conserves the redox energy in a proton gradient. This chain is NADH-quinone oxidoreductase subunit N, found in Anoxybacillus flavithermus (strain DSM 21510 / WK1).